The following is a 494-amino-acid chain: Glucose-6-phosphate 1-dehydrogenase (494 aa).

Residues Arg46 and Lys150 each coordinate NADP(+). Substrate is bound by residues His180, Lys184, Glu218, and Asp237. His242 serves as the catalytic Proton acceptor. Position 342 (Lys342) interacts with substrate.

The protein belongs to the glucose-6-phosphate dehydrogenase family.

The enzyme catalyses D-glucose 6-phosphate + NADP(+) = 6-phospho-D-glucono-1,5-lactone + NADPH + H(+). Its pathway is carbohydrate degradation; pentose phosphate pathway; D-ribulose 5-phosphate from D-glucose 6-phosphate (oxidative stage): step 1/3. Its function is as follows. Catalyzes the oxidation of glucose 6-phosphate to 6-phosphogluconolactone. This is Glucose-6-phosphate 1-dehydrogenase from Aggregatibacter actinomycetemcomitans (Actinobacillus actinomycetemcomitans).